A 205-amino-acid polypeptide reads, in one-letter code: Probable thymidylate kinase (205 aa).

7 to 14 lines the ATP pocket; sequence GIDGSGKS.

Belongs to the thymidylate kinase family.

The enzyme catalyses dTMP + ATP = dTDP + ADP. The chain is Probable thymidylate kinase from Methanoculleus marisnigri (strain ATCC 35101 / DSM 1498 / JR1).